Here is a 102-residue protein sequence, read N- to C-terminus: Cytochrome c oxidase subunit 6a, mitochondrial (102 aa).

The N-terminal 36 residues, 1 to 36 (MATAIVRSALSRAVTRAAPKTSVAPKRNFSSSAGHD), are a transit peptide targeting the mitochondrion.

It belongs to the cytochrome c oxidase subunit 6A (TC 3.D.4.11) family.

It is found in the mitochondrion inner membrane. In terms of biological role, this protein is one of the nuclear-coded polypeptide chains of cytochrome c oxidase, the terminal oxidase in mitochondrial electron transport. This chain is Cytochrome c oxidase subunit 6a, mitochondrial (COX6A), found in Arabidopsis thaliana (Mouse-ear cress).